The sequence spans 98 residues: UPF0473 protein GTNG_2486 (98 aa).

It belongs to the UPF0473 family.

The sequence is that of UPF0473 protein GTNG_2486 from Geobacillus thermodenitrificans (strain NG80-2).